The sequence spans 215 residues: MKIIEVDEELYQYIASQTKSIGESASDILRRLLNLPVSGVNLTAVDLTQSTMNSTNEEKGTQLPAEKNVVAETPKPSSEQEIRTPARKQSTQSIQHIVTKVKNLLQSEAFQEESKMVVRFLNILSVLYRTNPESFAQATEQETSQGRTRTYYARDEATLLAAGNHTKPRQIPDTPYWVITNTNSGRKMLMLERTMQFMELPEELIDEVRPYFAVV.

Residues 71-93 (AETPKPSSEQEIRTPARKQSTQS) are disordered. The tract at residues 181 to 187 (NTNSGRK) is interaction with DNA.

This sequence belongs to the SeqA family. As to quaternary structure, homodimer. Polymerizes to form helical filaments.

It is found in the cytoplasm. In terms of biological role, negative regulator of replication initiation, which contributes to regulation of DNA replication and ensures that replication initiation occurs exactly once per chromosome per cell cycle. Binds to pairs of hemimethylated GATC sequences in the oriC region, thus preventing assembly of replication proteins and re-initiation at newly replicated origins. Repression is relieved when the region becomes fully methylated. The protein is Negative modulator of initiation of replication of Mannheimia succiniciproducens (strain KCTC 0769BP / MBEL55E).